The primary structure comprises 791 residues: 1-phosphatidylinositol 4,5-bisphosphate phosphodiesterase delta-4 (791 aa).

The region spanning 16–124 is the PH domain; sequence LLMQKGTMMR…WMQGLQLLVG (109 aa). The segment at 26–53 is substrate binding; that stretch reads KVRSKSWKKLRFFRLQDDGMTVWHARQA. EF-hand domains lie at 134-169, 170-205, and 207-237; these read RLDQWLSDWFQRGDKNQDGRMSFGEVQRLLHLMNVE, MDQEYAFQLFQTADTSQSGTLEGEEFVEFYKSLTQR, and EVQELFEKFSSDGQKLTLLEFVDFLQEEQKE. Ca(2+)-binding residues include aspartate 147, asparagine 149, aspartate 151, arginine 153, glutamate 158, aspartate 183, serine 185, serine 187, threonine 189, and glutamate 194. Residues 213 to 243 carry the GBA motif; sequence EKFSSDGQKLTLLEFVDFLQEEQKEGERASD. The PI-PLC X-box domain maps to 290 to 435; that stretch reads QDMTQPLNHY…LRGKILVKGK (146 aa). The active site involves histidine 305. Positions 306, 335, and 337 each coordinate Ca(2+). The active site involves histidine 350. Position 384 (glutamate 384) interacts with Ca(2+). Substrate contacts are provided by lysine 433, lysine 435, serine 551, and arginine 578. The 117-residue stretch at 522 to 638 folds into the PI-PLC Y-box domain; sequence LSALVVYLKA…GYVLKPDFLR (117 aa). Positions 638 to 765 constitute a C2 domain; that stretch reads RDAQSSFHPE…QGYRHIHLLS (128 aa). The Ca(2+) site is built by isoleucine 679, aspartate 681, asparagine 705, aspartate 734, tyrosine 735, and aspartate 736. A PDZ-binding motif is present at residues 760–763; it reads HIHL.

In terms of assembly, interacts with GRIP1. Interacts (via GBA motif) with guanine nucleotide-binding protein G(i) alpha subunit GNAI3 (inactive GDP-bound form); low-affinity interaction. The cofactor is Ca(2+).

It is found in the membrane. The protein localises to the nucleus. Its subcellular location is the cytoplasm. The protein resides in the endoplasmic reticulum. It catalyses the reaction a 1,2-diacyl-sn-glycero-3-phospho-(1D-myo-inositol-4,5-bisphosphate) + H2O = 1D-myo-inositol 1,4,5-trisphosphate + a 1,2-diacyl-sn-glycerol + H(+). It carries out the reaction a 1,2-diacyl-sn-glycero-3-phospho-(1D-myo-inositol) + H2O = 1D-myo-inositol 1-phosphate + a 1,2-diacyl-sn-glycerol + H(+). Hydrolyzes the phosphatidylinositol 4,5-bisphosphate (PIP2) to generate 2 second messenger molecules diacylglycerol (DAG) and inositol 1,4,5-trisphosphate (IP3). DAG mediates the activation of protein kinase C (PKC), while IP3 releases Ca(2+) from intracellular stores. Required for acrosome reaction in sperm during fertilization, probably by acting as an important enzyme for intracellular Ca(2+) mobilization in the zona pellucida-induced acrosome reaction. May play a role in cell growth. Modulates the liver regeneration in cooperation with nuclear PKC. Overexpression up-regulates the Erk signaling pathway and proliferation. The sequence is that of 1-phosphatidylinositol 4,5-bisphosphate phosphodiesterase delta-4 (PLCD4) from Bos taurus (Bovine).